The following is a 505-amino-acid chain: MSTVAPAGALPSYSDVLARYEPVIGLETHVELGTASKMFCGCATAFGAEPNTQVCPVCLGLPGSLPVVNEAAVRFAVMIGLALHCEIASWCRFARKNYFYPDMPKNFQISQYDEPLCTNGWLDVEVEGEVHRVGITRVHMEEDTGKSLHVGGATGRIHGATHSLVDYNRAGIPLVEIVTEPDVRSPEVARAYVDELRELIRALGVSDVRMEQGSLRCDANVSLRPRPAPGDPDAPFGTRSETKNLNSLRSVERAVRYETTRQAALLDDGQRIIQETRHFDEASGRTSSGRSKEEATDYRYFPEPDLTPLALPAEYVERLRAGLPELPAARRARLIAEHGYTARDLQDLRNAAVLDLVEETIAAGAAPATARKWWLNELARRASDAGLQPRDLKITPTDVARITALVAAGELTDALARKVIDGVLAGEGTPDEVIAGRGLAIVADDSALTAAVDAALLGAPDIAEKVRGGKVNAVGPLVGAVMKAMKGQADAAAVRRLLLERLGVS.

The disordered stretch occupies residues 220 to 241 (NVSLRPRPAPGDPDAPFGTRSE).

Belongs to the GatB/GatE family. GatB subfamily. Heterotrimer of A, B and C subunits.

It catalyses the reaction L-glutamyl-tRNA(Gln) + L-glutamine + ATP + H2O = L-glutaminyl-tRNA(Gln) + L-glutamate + ADP + phosphate + H(+). It carries out the reaction L-aspartyl-tRNA(Asn) + L-glutamine + ATP + H2O = L-asparaginyl-tRNA(Asn) + L-glutamate + ADP + phosphate + 2 H(+). Functionally, allows the formation of correctly charged Asn-tRNA(Asn) or Gln-tRNA(Gln) through the transamidation of misacylated Asp-tRNA(Asn) or Glu-tRNA(Gln) in organisms which lack either or both of asparaginyl-tRNA or glutaminyl-tRNA synthetases. The reaction takes place in the presence of glutamine and ATP through an activated phospho-Asp-tRNA(Asn) or phospho-Glu-tRNA(Gln). In Frankia casuarinae (strain DSM 45818 / CECT 9043 / HFP020203 / CcI3), this protein is Aspartyl/glutamyl-tRNA(Asn/Gln) amidotransferase subunit B.